The sequence spans 195 residues: Molybdenum cofactor guanylyltransferase (195 aa).

GTP-binding positions include 12 to 14 (LAG), lysine 25, asparagine 53, aspartate 70, and aspartate 100. Aspartate 100 is a Mg(2+) binding site.

The protein belongs to the MobA family. As to quaternary structure, monomer. The cofactor is Mg(2+).

The protein localises to the cytoplasm. It carries out the reaction Mo-molybdopterin + GTP + H(+) = Mo-molybdopterin guanine dinucleotide + diphosphate. Its function is as follows. Transfers a GMP moiety from GTP to Mo-molybdopterin (Mo-MPT) cofactor (Moco or molybdenum cofactor) to form Mo-molybdopterin guanine dinucleotide (Mo-MGD) cofactor. The polypeptide is Molybdenum cofactor guanylyltransferase (Vibrio campbellii (strain ATCC BAA-1116)).